A 141-amino-acid chain; its full sequence is Calcitonin (141 aa).

A signal peptide spans M1–A25. Positions A26–S82 are excised as a propeptide. At S43 the chain carries Phosphoserine. 2 disordered regions span residues S64–C85 and I111–N141. A disulfide bridge connects residues C85 and C91. At P116 the chain carries Proline amide. Residues K118–P132 are compositionally biased toward basic and acidic residues.

It belongs to the calcitonin family.

It localises to the secreted. In terms of biological role, calcitonin is a peptide hormone that causes a rapid but short-lived drop in the level of calcium and phosphate in blood by promoting the incorporation of those ions in the bones. Calcitonin function is mediated by the calcitonin receptor/CALCR and the CALCR-RAMP2 (AMYR2) receptor complex. Its function is as follows. Katacalcin is a potent plasma calcium-lowering peptide. This Homo sapiens (Human) protein is Calcitonin.